The primary structure comprises 411 residues: Serine hydroxymethyltransferase (411 aa).

(6S)-5,6,7,8-tetrahydrofolate-binding positions include Leu119 and 123-125 (GHL). The residue at position 228 (Lys228) is an N6-(pyridoxal phosphate)lysine. (6S)-5,6,7,8-tetrahydrofolate is bound at residue 351–353 (SPF).

The protein belongs to the SHMT family. As to quaternary structure, homodimer. Requires pyridoxal 5'-phosphate as cofactor.

The protein localises to the cytoplasm. The catalysed reaction is (6R)-5,10-methylene-5,6,7,8-tetrahydrofolate + glycine + H2O = (6S)-5,6,7,8-tetrahydrofolate + L-serine. It participates in one-carbon metabolism; tetrahydrofolate interconversion. It functions in the pathway amino-acid biosynthesis; glycine biosynthesis; glycine from L-serine: step 1/1. Functionally, catalyzes the reversible interconversion of serine and glycine with tetrahydrofolate (THF) serving as the one-carbon carrier. This reaction serves as the major source of one-carbon groups required for the biosynthesis of purines, thymidylate, methionine, and other important biomolecules. Also exhibits THF-independent aldolase activity toward beta-hydroxyamino acids, producing glycine and aldehydes, via a retro-aldol mechanism. In Clostridium novyi (strain NT), this protein is Serine hydroxymethyltransferase.